A 300-amino-acid polypeptide reads, in one-letter code: Phosphatidylserine decarboxylase proenzyme (300 aa).

Catalysis depends on charge relay system; for autoendoproteolytic cleavage activity residues aspartate 117, histidine 173, and serine 260. Serine 260 serves as the catalytic Schiff-base intermediate with substrate; via pyruvic acid; for decarboxylase activity. Residue serine 260 is modified to Pyruvic acid (Ser); by autocatalysis.

The protein belongs to the phosphatidylserine decarboxylase family. PSD-B subfamily. Prokaryotic type II sub-subfamily. In terms of assembly, heterodimer of a large membrane-associated beta subunit and a small pyruvoyl-containing alpha subunit. The cofactor is pyruvate. Post-translationally, is synthesized initially as an inactive proenzyme. Formation of the active enzyme involves a self-maturation process in which the active site pyruvoyl group is generated from an internal serine residue via an autocatalytic post-translational modification. Two non-identical subunits are generated from the proenzyme in this reaction, and the pyruvate is formed at the N-terminus of the alpha chain, which is derived from the carboxyl end of the proenzyme. The autoendoproteolytic cleavage occurs by a canonical serine protease mechanism, in which the side chain hydroxyl group of the serine supplies its oxygen atom to form the C-terminus of the beta chain, while the remainder of the serine residue undergoes an oxidative deamination to produce ammonia and the pyruvoyl prosthetic group on the alpha chain. During this reaction, the Ser that is part of the protease active site of the proenzyme becomes the pyruvoyl prosthetic group, which constitutes an essential element of the active site of the mature decarboxylase.

It is found in the cell membrane. It carries out the reaction a 1,2-diacyl-sn-glycero-3-phospho-L-serine + H(+) = a 1,2-diacyl-sn-glycero-3-phosphoethanolamine + CO2. The protein operates within phospholipid metabolism; phosphatidylethanolamine biosynthesis; phosphatidylethanolamine from CDP-diacylglycerol: step 2/2. Functionally, catalyzes the formation of phosphatidylethanolamine (PtdEtn) from phosphatidylserine (PtdSer). In Fusobacterium nucleatum subsp. nucleatum (strain ATCC 25586 / DSM 15643 / BCRC 10681 / CIP 101130 / JCM 8532 / KCTC 2640 / LMG 13131 / VPI 4355), this protein is Phosphatidylserine decarboxylase proenzyme.